We begin with the raw amino-acid sequence, 154 residues long: Protein X (154 aa).

Residues 68-117 are mitochondrial targeting sequence; the sequence is PCALRFTSARCMETTVNAHQSLPKVLHKRTLGLPAMSTTDLEAYFKDCVF.

The protein belongs to the orthohepadnavirus protein X family. As to quaternary structure, may form homodimer. May interact with host CEBPA, CFLAR, CREB1, DDB1, E4F1, HBXIP, HSPD1/HSP60, NFKBIA, POLR2E and SMAD4. Interacts with host SMC5-SMC6 complex and induces its degradation. Interacts with host TRPC4AP; leading to prevent ubiquitination of TRPC4AP. Interacts with host PLSCR1; this interaction promotes ubiquitination and degradation of HBx and impairs HBx-mediated cell proliferation. In terms of processing, a fraction may be phosphorylated in insect cells and HepG2 cells, a human hepatoblastoma cell line. Phosphorylated in vitro by host protein kinase C or mitogen-activated protein kinase. N-acetylated in insect cells.

It localises to the host cytoplasm. The protein resides in the host nucleus. It is found in the host mitochondrion. Multifunctional protein that plays a role in silencing host antiviral defenses and promoting viral transcription. Does not seem to be essential for HBV infection. May be directly involved in development of cirrhosis and liver cancer (hepatocellular carcinoma). Most of cytosolic activities involve modulation of cytosolic calcium. The effect on apoptosis is controversial depending on the cell types in which the studies have been conducted. May induce apoptosis by localizing in mitochondria and causing loss of mitochondrial membrane potential. May also modulate apoptosis by binding host CFLAR, a key regulator of the death-inducing signaling complex (DISC). Promotes viral transcription by using the host E3 ubiquitin ligase DDB1 to target the SMC5-SMC6 complex to proteasomal degradation. This host complex would otherwise bind to viral episomal DNA, and prevents its transcription. Moderately stimulates transcription of many different viral and cellular transcription elements. Promoters and enhancers stimulated by HBx contain DNA binding sites for NF-kappa-B, AP-1, AP-2, c-EBP, ATF/CREB, or the calcium-activated factor NF-AT. This is Protein X from Homo sapiens (Human).